A 386-amino-acid polypeptide reads, in one-letter code: Prostatic acid phosphatase (386 aa).

Residues 1–32 (MRAAPLLLARAASLSLGFLFLLFFWLDRSVLA) form the signal peptide. Position 43 (Arg43) interacts with substrate. Residue His44 is the Nucleophile of the active site. Residue Arg47 participates in substrate binding. N-linked (GlcNAc...) asparagine glycosylation is present at Asn94. Arg111 is a substrate binding site. 3 disulfide bridges follow: Cys161–Cys372, Cys215–Cys313, and Cys347–Cys351. N-linked (GlcNAc...) asparagine glycosylation occurs at Asn220. His289 provides a ligand contact to substrate. Asp290 serves as the catalytic Proton donor. Residue Asn333 is glycosylated (N-linked (GlcNAc...) asparagine).

It belongs to the histidine acid phosphatase family. In terms of assembly, homodimer; dimer formation is required for phosphatase activity. In terms of processing, N-glycosylated. High mannose content, partially sialylated and fucosylated biantennary complex. Also fucosylated with partially sialylated triantennary complex oligosaccharides. Post-translationally, proteolytically cleaved in seminal fluid to produce several peptides. Peptide PAPf39, the most prominent, forms amyloid beta-sheet fibrils, SEVI (semen-derived enhancer of viral infection). As to expression, highly expressed in the prostate, restricted to glandular and ductal epithelial cells. Also expressed in bladder, kidney, pancreas, lung, cervix, testis and ovary. Weak expression in a subset of pancreatic islet cells, squamous epithelia, the pilosebaceous unit, colonic neuroendocrine cells and skin adnexal structures. Low expression in prostate carcinoma cells and tissues. In terms of tissue distribution, widely expressed. Expressed in the sarcolemma of skeletal muscle.

It is found in the secreted. It localises to the cell membrane. The protein resides in the lysosome membrane. Its subcellular location is the nucleus. The protein localises to the cytoplasm. It is found in the cytosol. The catalysed reaction is a phosphate monoester + H2O = an alcohol + phosphate. The enzyme catalyses 1-(9Z-octadecenoyl)-sn-glycero-3-phosphate + H2O = 1-(9Z-octadecenoyl)-sn-glycerol + phosphate. It carries out the reaction a ribonucleoside 5'-phosphate + H2O = a ribonucleoside + phosphate. It catalyses the reaction O-phospho-L-tyrosyl-[protein] + H2O = L-tyrosyl-[protein] + phosphate. With respect to regulation, phosphatase activity inhibited by L(+)-tartrate, and by its derivative, alpha-benzylaminobenzylphosphonic acid. A non-specific tyrosine phosphatase that dephosphorylates a diverse number of substrates under acidic conditions (pH 4-6) including alkyl, aryl, and acyl orthophosphate monoesters and phosphorylated proteins. Has lipid phosphatase activity and inactivates lysophosphatidic acid in seminal plasma. Its function is as follows. Tyrosine phosphatase that acts as a tumor suppressor of prostate cancer through dephosphorylation of ERBB2 and deactivation of MAPK-mediated signaling. In addition to its tyrosine phosphatase activity has ecto-5'-nucleotidase activity in dorsal root ganglion (DRG) neurons. Generates adenosine from AMP which acts as a pain suppressor. Functionally, (Microbial infection) Forms amyloid beta-sheet fibrils in semen. These fibrils, termed SEVI (semen-derived enhancer of viral infection) capture HIV virions, attach them to target cells and enhance infection. SEVI amyloid fibrils are degraded by polyphenol epigallocatechin-3-gallate (EGCG), a constituent of green tea. Target cell attachment and enhancement of HIV infection is inhibited by surfen. Also similarly boosts XMRV (xenotropic murine leukemia virus-related virus) infection. This chain is Prostatic acid phosphatase, found in Homo sapiens (Human).